We begin with the raw amino-acid sequence, 352 residues long: MSGNTFGKIFTVTTCGESHGDSLAAIIDGCPSNIPLCEADIQLELDRRKPGQSKFTTQRKEPDEVKIISGVFEGKTTGTPIGLIIKNQDQKSKDYSEIKDKFRPGHADYTYFKKYGIRDYRGGGRSSARETAMRVAAGAIAKKILKHYGIEIYGFCSQIGSLKIDFIDKDFINQNPFFIANKNAVPACEDLIHSIRKQGDSIGAEVTVVATGLEAGLGRPVFDRLDASIAYAMMSINAVKAVSIGDGFDCVTQKGSQHRDEITQQQGFLSNHAGGILGGISTGQDIIAKLAFKPTSSILQPGKSIDVQGNDTTVITKGRHDPCVGIRGVPIAEAMLALVLVDELLITRSYRD.

Residue R48 participates in NADP(+) binding. FMN contacts are provided by residues 125–127 (RSS), 237–238 (NA), G278, 293–297 (KPTSS), and R319.

It belongs to the chorismate synthase family. In terms of assembly, homotetramer. It depends on FMNH2 as a cofactor.

The catalysed reaction is 5-O-(1-carboxyvinyl)-3-phosphoshikimate = chorismate + phosphate. It participates in metabolic intermediate biosynthesis; chorismate biosynthesis; chorismate from D-erythrose 4-phosphate and phosphoenolpyruvate: step 7/7. In terms of biological role, catalyzes the anti-1,4-elimination of the C-3 phosphate and the C-6 proR hydrogen from 5-enolpyruvylshikimate-3-phosphate (EPSP) to yield chorismate, which is the branch point compound that serves as the starting substrate for the three terminal pathways of aromatic amino acid biosynthesis. This reaction introduces a second double bond into the aromatic ring system. This is Chorismate synthase from Francisella tularensis subsp. mediasiatica (strain FSC147).